The following is a 327-amino-acid chain: MFDAAPIKKVSVVIPVYNEQESLPELIRRTTAACESLGKAWEILLIDDGSSDSSAELMVKASQEADSHIISILLNRNYGQHAAIMAGFSHVSGDLIITLDADLQNPPEEIPRLVAKADEGFDVVGTVRQNRQDSLFRKSASKIINLLIQRTTGKAMGDYGCMLRAYRRPIIDTMLRCHERSTFIPILANIFARRATEIPVHHAEREFGDSKYSFMRLINLMYDLVTCLTTTPLRLLSLLGSVIAIGGFSLSVLLIVLRLALGPQWAAEGVFMLFAVLFTFIGAQFIGMGLLGEYIGRIYNDVRARPRYFVQQVIYPESTSFTEESHQ.

Topologically, residues 1–235 are cytoplasmic; it reads MFDAAPIKKV…TCLTTTPLRL (235 aa). The helical transmembrane segment at 236–256 threads the bilayer; sequence LSLLGSVIAIGGFSLSVLLIV. At 257–269 the chain is on the periplasmic side; sequence LRLALGPQWAAEG. Residues 270–290 form a helical membrane-spanning segment; sequence VFMLFAVLFTFIGAQFIGMGL. The Cytoplasmic segment spans residues 291–327; it reads LGEYIGRIYNDVRARPRYFVQQVIYPESTSFTEESHQ.

It belongs to the glycosyltransferase 2 family.

Its subcellular location is the cell inner membrane. The catalysed reaction is UDP-4-deoxy-4-formamido-beta-L-arabinose + di-trans,octa-cis-undecaprenyl phosphate = 4-deoxy-4-formamido-alpha-L-arabinopyranosyl di-trans,octa-cis-undecaprenyl phosphate + UDP. The protein operates within glycolipid biosynthesis; 4-amino-4-deoxy-alpha-L-arabinose undecaprenyl phosphate biosynthesis; 4-amino-4-deoxy-alpha-L-arabinose undecaprenyl phosphate from UDP-4-deoxy-4-formamido-beta-L-arabinose and undecaprenyl phosphate: step 1/2. It participates in bacterial outer membrane biogenesis; lipopolysaccharide biosynthesis. Its function is as follows. Catalyzes the transfer of 4-deoxy-4-formamido-L-arabinose from UDP to undecaprenyl phosphate. The modified arabinose is attached to lipid A and is required for resistance to polymyxin and cationic antimicrobial peptides. This Salmonella paratyphi A (strain ATCC 9150 / SARB42) protein is Undecaprenyl-phosphate 4-deoxy-4-formamido-L-arabinose transferase.